Consider the following 305-residue polypeptide: MNAPSSAAGHVSSHWRQYVALTKPRVVQLIVFCAAIGMLLAVPGAPGLADLGKALWATLGIWLVASAAAAFNCLIEQQIDSRMKRTAWRPTARGELSRTQALIFSAVLCSAGMAVLHEAVNPLTAWLTLGTFVGYAVIYTVVLKPLTPQNIVIGGISGAMPPLLGWAAMTGEVGPEGLILCLIIFLWTPPHFWALALYRAEDYARAGLPMLPVTHGNEFTRLQILLYTFVLLAGTLLPFVQGMSGWLYLAAAFVLGLRFIHYAWRLWRNYSEALARQTFRFSIWHLSLLFAALLVDHYTQDLLTL.

Transmembrane regions (helical) follow at residues 29–49 (LIVFCAAIGMLLAVPGAPGLA), 55–75 (LWATLGIWLVASAAAAFNCLI), 101–121 (ALIFSAVLCSAGMAVLHEAVN), 123–143 (LTAWLTLGTFVGYAVIYTVVL), 151–171 (IVIGGISGAMPPLLGWAAMTG), 177–197 (GLILCLIIFLWTPPHFWALAL), 219–241 (FTRLQILLYTFVLLAGTLLPFVQ), 246–268 (WLYLAAAFVLGLRFIHYAWRLWR), and 283–303 (IWHLSLLFAALLVDHYTQDLL).

Belongs to the UbiA prenyltransferase family. Protoheme IX farnesyltransferase subfamily.

Its subcellular location is the cell inner membrane. It catalyses the reaction heme b + (2E,6E)-farnesyl diphosphate + H2O = Fe(II)-heme o + diphosphate. It functions in the pathway porphyrin-containing compound metabolism; heme O biosynthesis; heme O from protoheme: step 1/1. Functionally, converts heme B (protoheme IX) to heme O by substitution of the vinyl group on carbon 2 of heme B porphyrin ring with a hydroxyethyl farnesyl side group. This is Protoheme IX farnesyltransferase from Leptothrix cholodnii (strain ATCC 51168 / LMG 8142 / SP-6) (Leptothrix discophora (strain SP-6)).